Here is a 591-residue protein sequence, read N- to C-terminus: UvrABC system protein C (591 aa).

The GIY-YIG domain occupies 14-91 (DQPGCYLMKD…IKKHDPKYNV (78 aa)). The UVR domain maps to 196–231 (KEVKVELEKKMHKAAEELNFERAKELRDTLGYMEAV).

Belongs to the UvrC family. Interacts with UvrB in an incision complex.

It localises to the cytoplasm. Functionally, the UvrABC repair system catalyzes the recognition and processing of DNA lesions. UvrC both incises the 5' and 3' sides of the lesion. The N-terminal half is responsible for the 3' incision and the C-terminal half is responsible for the 5' incision. The chain is UvrABC system protein C from Halalkalibacterium halodurans (strain ATCC BAA-125 / DSM 18197 / FERM 7344 / JCM 9153 / C-125) (Bacillus halodurans).